Reading from the N-terminus, the 51-residue chain is DNA-directed RNA polymerases II, IV and V subunit 12 (51 aa).

Residues Cys12, Cys15, Cys29, and Cys32 each coordinate Zn(2+).

It belongs to the archaeal Rpo12/eukaryotic RPC10 RNA polymerase subunit family. As to quaternary structure, component of the RNA polymerase II, IV and V complexes. Associates with the mediator complex. Interacts with NRPD1.

It is found in the nucleus. Functionally, DNA-dependent RNA polymerase catalyzes the transcription of DNA into RNA using the four ribonucleoside triphosphates as substrates. Component of RNA polymerase II which synthesizes mRNA precursors and many functional non-coding RNAs. Pol II is the central component of the basal RNA polymerase II transcription machinery. It is composed of mobile elements that move relative to each other. Component of RNA polymerases IV and V which mediate short-interfering RNAs (siRNA) accumulation and subsequent RNA-directed DNA methylation-dependent (RdDM) transcriptional gene silencing (TGS) of endogenous repeated sequences, including transposable elements. The protein is DNA-directed RNA polymerases II, IV and V subunit 12 (NRPB12) of Arabidopsis thaliana (Mouse-ear cress).